Reading from the N-terminus, the 445-residue chain is Enolase 2 (445 aa).

Substrate is bound by residues histidine 164 and glutamate 173. The Proton donor role is filled by glutamate 216. Mg(2+)-binding residues include aspartate 251, glutamate 301, and aspartate 328. Substrate contacts are provided by glutamate 301 and aspartate 328. Residue lysine 353 is the Proton acceptor of the active site. Substrate-binding positions include 380–383 (SHRS) and lysine 404.

This sequence belongs to the enolase family. As to quaternary structure, homodimer. Mg(2+) is required as a cofactor.

It is found in the cytoplasm. The catalysed reaction is (2R)-2-phosphoglycerate = phosphoenolpyruvate + H2O. The protein operates within carbohydrate degradation; glycolysis; pyruvate from D-glyceraldehyde 3-phosphate: step 4/5. This is Enolase 2 (ENO2) from Hevea brasiliensis (Para rubber tree).